We begin with the raw amino-acid sequence, 379 residues long: Orotidine 5'-phosphate decarboxylase (379 aa).

Substrate is bound by residues Asp42, 64 to 66 (KTH), and 99 to 108 (DRKFGDIGHT). Catalysis depends on Lys101, which acts as the Proton donor. Positions 165 to 198 (PTMDQFDDAEDAKDDEPATVNDNGSNMMEKPIYA) are disordered. The span at 169–178 (QFDDAEDAKD) shows a compositional bias: acidic residues. 2 residues coordinate substrate: Tyr331 and Arg350.

It belongs to the OMP decarboxylase family.

It catalyses the reaction orotidine 5'-phosphate + H(+) = UMP + CO2. Its pathway is pyrimidine metabolism; UMP biosynthesis via de novo pathway; UMP from orotate: step 2/2. The sequence is that of Orotidine 5'-phosphate decarboxylase (pyr4) from Hypocrea atroviridis (Trichoderma atroviride).